We begin with the raw amino-acid sequence, 477 residues long: Probable F-box protein At5g25300 (477 aa).

Residues 346-377 (VDMNKEDSQIEINEKETKINQEHDQSDETQAK) adopt a coiled-coil conformation. Residues 412-458 (SPPWSELPGDILRSVFERLSFVDFQRAKQTCPIKRSKSNCLRLWLIT) enclose the F-box domain.

This chain is Probable F-box protein At5g25300, found in Arabidopsis thaliana (Mouse-ear cress).